A 582-amino-acid polypeptide reads, in one-letter code: Threonine--tRNA ligase (582 aa).

The tract at residues 185 to 478 (DHRKLGKELE…LTEQYGGAFP (294 aa)) is catalytic. Zn(2+)-binding residues include Cys278, His329, and His455.

Belongs to the class-II aminoacyl-tRNA synthetase family. Homodimer. Zn(2+) serves as cofactor.

Its subcellular location is the cytoplasm. It carries out the reaction tRNA(Thr) + L-threonine + ATP = L-threonyl-tRNA(Thr) + AMP + diphosphate + H(+). Functionally, catalyzes the attachment of threonine to tRNA(Thr) in a two-step reaction: L-threonine is first activated by ATP to form Thr-AMP and then transferred to the acceptor end of tRNA(Thr). Also edits incorrectly charged L-seryl-tRNA(Thr). The polypeptide is Threonine--tRNA ligase (Dehalococcoides mccartyi (strain ATCC BAA-2266 / KCTC 15142 / 195) (Dehalococcoides ethenogenes (strain 195))).